Here is a 282-residue protein sequence, read N- to C-terminus: Bifunctional protein FolD (282 aa).

NADP(+) is bound by residues Asn165 to Ser167, Ser190, and Ile231.

It belongs to the tetrahydrofolate dehydrogenase/cyclohydrolase family. Homodimer.

It catalyses the reaction (6R)-5,10-methylene-5,6,7,8-tetrahydrofolate + NADP(+) = (6R)-5,10-methenyltetrahydrofolate + NADPH. The enzyme catalyses (6R)-5,10-methenyltetrahydrofolate + H2O = (6R)-10-formyltetrahydrofolate + H(+). The protein operates within one-carbon metabolism; tetrahydrofolate interconversion. In terms of biological role, catalyzes the oxidation of 5,10-methylenetetrahydrofolate to 5,10-methenyltetrahydrofolate and then the hydrolysis of 5,10-methenyltetrahydrofolate to 10-formyltetrahydrofolate. This is Bifunctional protein FolD from Clostridium botulinum (strain Kyoto / Type A2).